Consider the following 670-residue polypeptide: Probable plastid-lipid-associated protein 14, chloroplastic (670 aa).

A chloroplast-targeting transit peptide spans 1–52 (MALCGVCSTPNLPNLQVFRSVRNSSIGYKRNHSLWQLRSSSFRAKSVIFHCS). One can recognise a Protein kinase domain in the interval 88 to 399 (FRILDRVSIG…CLDALKHPFL (312 aa)).

This sequence belongs to the PAP/fibrillin family. Post-translationally, not autophosphorylated. Expressed in roots.

Its subcellular location is the plastid. The protein resides in the chloroplast. In terms of biological role, directly regulated by DOF3.6/OBP3; unknown function. The polypeptide is Probable plastid-lipid-associated protein 14, chloroplastic (PAP14) (Arabidopsis thaliana (Mouse-ear cress)).